Consider the following 381-residue polypeptide: tRNA-specific 2-thiouridylase MnmA (381 aa).

Residues 14-21 (AMSGGVDS) and Met-40 each bind ATP. Cys-108 (nucleophile) is an active-site residue. Residues Cys-108 and Cys-205 are joined by a disulfide bond. Gly-132 lines the ATP pocket. An interaction with tRNA region spans residues 155–157 (KDQ). The Cysteine persulfide intermediate role is filled by Cys-205. Residues 309-310 (RY) form an interaction with tRNA region.

It belongs to the MnmA/TRMU family.

It localises to the cytoplasm. The enzyme catalyses S-sulfanyl-L-cysteinyl-[protein] + uridine(34) in tRNA + AH2 + ATP = 2-thiouridine(34) in tRNA + L-cysteinyl-[protein] + A + AMP + diphosphate + H(+). Functionally, catalyzes the 2-thiolation of uridine at the wobble position (U34) of tRNA, leading to the formation of s(2)U34. The protein is tRNA-specific 2-thiouridylase MnmA of Deinococcus geothermalis (strain DSM 11300 / CIP 105573 / AG-3a).